A 256-amino-acid polypeptide reads, in one-letter code: Chlorophyll a-b binding protein CP24 10B, chloroplastic (256 aa).

Residues 1–45 (MTTTSATAVLNGLSSSFLTGGKKTQALLGAHVTARVTTPKRFVVA) constitute a chloroplast transit peptide. The next 2 membrane-spanning stretches (helical) occupy residues 106–126 (WAMA…IPWF) and 134–154 (AIAP…MGWV).

The protein belongs to the ELIP/psbS family.

The protein resides in the plastid. It localises to the chloroplast thylakoid membrane. The polypeptide is Chlorophyll a-b binding protein CP24 10B, chloroplastic (CAP10B) (Solanum lycopersicum (Tomato)).